The chain runs to 85 residues: Large ribosomal subunit protein bL27 (85 aa).

The segment at 1–22 (MAHKKAGGSTKNGRDSESKRLG) is disordered.

The protein belongs to the bacterial ribosomal protein bL27 family.

The sequence is that of Large ribosomal subunit protein bL27 from Idiomarina loihiensis (strain ATCC BAA-735 / DSM 15497 / L2-TR).